The sequence spans 216 residues: Small ribosomal subunit protein uS3 (216 aa).

Residues 38–108 (LREFVKKKLH…DLAIDIQEVK (71 aa)) form the KH type-2 domain.

It belongs to the universal ribosomal protein uS3 family. Part of the 30S ribosomal subunit. Forms a tight complex with proteins S10 and S14.

Binds the lower part of the 30S subunit head. Binds mRNA in the 70S ribosome, positioning it for translation. This Desulfosudis oleivorans (strain DSM 6200 / JCM 39069 / Hxd3) (Desulfococcus oleovorans) protein is Small ribosomal subunit protein uS3.